The chain runs to 101 residues: Apolipoprotein C-II (101 aa).

The first 22 residues, 1-22, serve as a signal peptide directing secretion; the sequence is MGIRYLLVLVLVLLVLGCEVQG. A propeptide spanning residues 23–28 is cleaved from the precursor; the sequence is AHMPQQ. Residues 66–74 form a lipid binding region; sequence TMDEKIREI. The segment at 78 to 101 is lipoprotein lipase cofactor; it reads STAAVSTYAGIFTDQLLSMLKGDQ.

Belongs to the apolipoprotein C2 family. Post-translationally, proapolipoprotein C-II is synthesized as a sialic acid containing glycoprotein which is subsequently desialylated prior to its proteolytic processing. In terms of processing, proapolipoprotein C-II, the major form found in plasma undergoes proteolytic cleavage of its N-terminal hexapeptide to generate apolipoprotein C-II, which occurs as the minor form in plasma.

Its subcellular location is the secreted. Component of chylomicrons, very low-density lipoproteins (VLDL), low-density lipoproteins (LDL), and high-density lipoproteins (HDL) in plasma. Plays an important role in lipoprotein metabolism as an activator of lipoprotein lipase. Both proapolipoprotein C-II and apolipoprotein C-II can activate lipoprotein lipase. The sequence is that of Apolipoprotein C-II (APOC2) from Neomonachus schauinslandi (Hawaiian monk seal).